Here is a 298-residue protein sequence, read N- to C-terminus: Cholesterol 25-hydroxylase (298 aa).

Asn-5 carries N-linked (GlcNAc...) asparagine glycosylation. The next 3 helical transmembrane spans lie at 38 to 58 (IFPV…FVVL), 88 to 108 (LGLT…LHWV), and 124 to 144 (LLSH…AWHL). The Fatty acid hydroxylase domain maps to 128–263 (VLICLLLFDT…FTHWDKMLGT (136 aa)). The Histidine box-1 signature appears at 142 to 146 (WHLLH). Positions 157-161 (HKVHH) match the Histidine box-2 motif. Asn-163 carries N-linked (GlcNAc...) asparagine glycosylation. Positions 238–244 (HHDMHHS) match the Histidine box-3 motif.

The protein belongs to the sterol desaturase family. Fe cation is required as a cofactor. N-glycosylated. Widely expressed at low level and at higher level in the lung. Weakly expressed in the heart, lung and kidney.

It localises to the endoplasmic reticulum membrane. The enzyme catalyses cholesterol + AH2 + O2 = 25-hydroxycholesterol + A + H2O. It catalyses the reaction cholesterol + NADPH + O2 + H(+) = 25-hydroxycholesterol + NADP(+) + H2O. Catalyzes the formation of 25-hydroxycholesterol from cholesterol, leading to repress cholesterol biosynthetic enzymes. Plays a key role in cell positioning and movement in lymphoid tissues: 25-hydroxycholesterol is an intermediate in biosynthesis of 7-alpha,25-dihydroxycholesterol (7-alpha,25-OHC), an oxysterol that acts as a ligand for the G protein-coupled receptor GPR183/EBI2, a chemotactic receptor for a number of lymphoid cells. May play an important role in regulating lipid metabolism by synthesizing a corepressor that blocks sterol regulatory element binding protein (SREBP) processing. In testis, production of 25-hydroxycholesterol by macrophages may play a role in Leydig cell differentiation. Required to restrain inflammation in macrophages: production of 25-hydroxycholesterol protects macrophages from cholesterol overload, thereby preventing mitochondrial DNA release and subsequent activation of the AIM2 inflammasome. Interferon-stimulated gene which has broad antiviral activities against a wide range of enveloped viruses. This Mus musculus (Mouse) protein is Cholesterol 25-hydroxylase.